The chain runs to 388 residues: Succinate--CoA ligase [ADP-forming] subunit beta (388 aa).

Residues 9–244 (KSLFAEYGLP…PSQDDAREAH (236 aa)) form the ATP-grasp domain. ATP contacts are provided by residues lysine 46, 53-55 (GRG), glutamate 99, threonine 102, and glutamate 107. Mg(2+) contacts are provided by asparagine 199 and aspartate 213. Residues asparagine 264 and 321-323 (GIV) each bind substrate.

It belongs to the succinate/malate CoA ligase beta subunit family. As to quaternary structure, heterotetramer of two alpha and two beta subunits. It depends on Mg(2+) as a cofactor.

The catalysed reaction is succinate + ATP + CoA = succinyl-CoA + ADP + phosphate. It catalyses the reaction GTP + succinate + CoA = succinyl-CoA + GDP + phosphate. It functions in the pathway carbohydrate metabolism; tricarboxylic acid cycle; succinate from succinyl-CoA (ligase route): step 1/1. In terms of biological role, succinyl-CoA synthetase functions in the citric acid cycle (TCA), coupling the hydrolysis of succinyl-CoA to the synthesis of either ATP or GTP and thus represents the only step of substrate-level phosphorylation in the TCA. The beta subunit provides nucleotide specificity of the enzyme and binds the substrate succinate, while the binding sites for coenzyme A and phosphate are found in the alpha subunit. The polypeptide is Succinate--CoA ligase [ADP-forming] subunit beta (Shewanella oneidensis (strain ATCC 700550 / JCM 31522 / CIP 106686 / LMG 19005 / NCIMB 14063 / MR-1)).